A 539-amino-acid polypeptide reads, in one-letter code: Chaperonin GroEL (539 aa).

ATP-binding positions include 29 to 32 (TIGP), 86 to 90 (DGTTT), Gly-413, 476 to 478 (NAA), and Asp-492.

It belongs to the chaperonin (HSP60) family. As to quaternary structure, forms a cylinder of 14 subunits composed of two heptameric rings stacked back-to-back. Interacts with the co-chaperonin GroES.

The protein resides in the cytoplasm. The enzyme catalyses ATP + H2O + a folded polypeptide = ADP + phosphate + an unfolded polypeptide.. Functionally, together with its co-chaperonin GroES, plays an essential role in assisting protein folding. The GroEL-GroES system forms a nano-cage that allows encapsulation of the non-native substrate proteins and provides a physical environment optimized to promote and accelerate protein folding. This is Chaperonin GroEL from Leuconostoc mesenteroides subsp. mesenteroides (strain ATCC 8293 / DSM 20343 / BCRC 11652 / CCM 1803 / JCM 6124 / NCDO 523 / NBRC 100496 / NCIMB 8023 / NCTC 12954 / NRRL B-1118 / 37Y).